The following is an 832-amino-acid chain: Protein PPP4R3C (832 aa).

The disordered stretch occupies residues 708 to 832 (RTQEGEAVMP…SPKKKPHLSS (125 aa)). Composition is skewed to basic and acidic residues over residues 725-735 (FTETKRTHQEG) and 749-765 (METK…DSPK). The span at 769–779 (SGDFKFSSSYS) shows a compositional bias: low complexity. Residues 801–820 (PDDEEEKEEDEEEKEEDKED) are compositionally biased toward acidic residues.

Belongs to the SMEK family.

The polypeptide is Protein PPP4R3C (Homo sapiens (Human)).